The primary structure comprises 323 residues: Methenyltetrahydromethanopterin cyclohydrolase (323 aa).

It belongs to the MCH family.

It localises to the cytoplasm. The catalysed reaction is 5,10-methenyl-5,6,7,8-tetrahydromethanopterin + H2O = N(5)-formyl-5,6,7,8-tetrahydromethanopterin + H(+). The protein operates within one-carbon metabolism; methanogenesis from CO(2); 5,10-methenyl-5,6,7,8-tetrahydromethanopterin from CO(2): step 3/3. Its function is as follows. Catalyzes the reversible interconversion of 5-formyl-H(4)MPT to methenyl-H(4)MPT(+). The sequence is that of Methenyltetrahydromethanopterin cyclohydrolase from Methanobrevibacter smithii (strain ATCC 35061 / DSM 861 / OCM 144 / PS).